The sequence spans 398 residues: Acetate kinase (398 aa).

Asn-7 contributes to the Mg(2+) binding site. Lys-14 serves as a coordination point for ATP. Arg-91 provides a ligand contact to substrate. The active-site Proton donor/acceptor is the Asp-148. Residues 208–212 (HLGNG), 283–285 (DFR), and 331–335 (GIGEH) each bind ATP. Glu-386 contributes to the Mg(2+) binding site.

It belongs to the acetokinase family. Homodimer. It depends on Mg(2+) as a cofactor. Mn(2+) serves as cofactor.

It localises to the cytoplasm. It catalyses the reaction acetate + ATP = acetyl phosphate + ADP. The protein operates within metabolic intermediate biosynthesis; acetyl-CoA biosynthesis; acetyl-CoA from acetate: step 1/2. In terms of biological role, catalyzes the formation of acetyl phosphate from acetate and ATP. Can also catalyze the reverse reaction. In Clostridium botulinum (strain Eklund 17B / Type B), this protein is Acetate kinase.